The following is a 275-amino-acid chain: 4-hydroxy-3-methylbut-2-enyl diphosphate reductase (275 aa).

Cysteine 12 is a binding site for [4Fe-4S] cluster. Histidine 36 and histidine 70 together coordinate (2E)-4-hydroxy-3-methylbut-2-enyl diphosphate. Residues histidine 36 and histidine 70 each contribute to the dimethylallyl diphosphate site. Histidine 36 and histidine 70 together coordinate isopentenyl diphosphate. Residue cysteine 92 participates in [4Fe-4S] cluster binding. Histidine 120 is a (2E)-4-hydroxy-3-methylbut-2-enyl diphosphate binding site. Histidine 120 lines the dimethylallyl diphosphate pocket. Residue histidine 120 coordinates isopentenyl diphosphate. The active-site Proton donor is the glutamate 122. Threonine 158 lines the (2E)-4-hydroxy-3-methylbut-2-enyl diphosphate pocket. Cysteine 186 provides a ligand contact to [4Fe-4S] cluster. Residues serine 214, serine 215, asparagine 216, and serine 258 each coordinate (2E)-4-hydroxy-3-methylbut-2-enyl diphosphate. Residues serine 214, serine 215, asparagine 216, and serine 258 each contribute to the dimethylallyl diphosphate site. The isopentenyl diphosphate site is built by serine 214, serine 215, asparagine 216, and serine 258.

This sequence belongs to the IspH family. [4Fe-4S] cluster is required as a cofactor.

It carries out the reaction isopentenyl diphosphate + 2 oxidized [2Fe-2S]-[ferredoxin] + H2O = (2E)-4-hydroxy-3-methylbut-2-enyl diphosphate + 2 reduced [2Fe-2S]-[ferredoxin] + 2 H(+). The enzyme catalyses dimethylallyl diphosphate + 2 oxidized [2Fe-2S]-[ferredoxin] + H2O = (2E)-4-hydroxy-3-methylbut-2-enyl diphosphate + 2 reduced [2Fe-2S]-[ferredoxin] + 2 H(+). Its pathway is isoprenoid biosynthesis; dimethylallyl diphosphate biosynthesis; dimethylallyl diphosphate from (2E)-4-hydroxy-3-methylbutenyl diphosphate: step 1/1. It participates in isoprenoid biosynthesis; isopentenyl diphosphate biosynthesis via DXP pathway; isopentenyl diphosphate from 1-deoxy-D-xylulose 5-phosphate: step 6/6. Catalyzes the conversion of 1-hydroxy-2-methyl-2-(E)-butenyl 4-diphosphate (HMBPP) into a mixture of isopentenyl diphosphate (IPP) and dimethylallyl diphosphate (DMAPP). Acts in the terminal step of the DOXP/MEP pathway for isoprenoid precursor biosynthesis. This chain is 4-hydroxy-3-methylbut-2-enyl diphosphate reductase, found in Campylobacter hominis (strain ATCC BAA-381 / DSM 21671 / CCUG 45161 / LMG 19568 / NCTC 13146 / CH001A).